The chain runs to 428 residues: Ribulose bisphosphate carboxylase (428 aa).

Catalysis depends on lysine 151, which acts as the Proton acceptor. Residue lysine 153 participates in substrate binding. Mg(2+) is bound by residues lysine 177, aspartate 179, and glutamate 180. Lysine 177 is subject to N6-carboxylysine. The active-site Proton acceptor is the histidine 270. Substrate is bound by residues arginine 271, histidine 303, 354-356, and 376-379; these read SGG and QFGG.

This sequence belongs to the RuBisCO large chain family. Type III subfamily. As to quaternary structure, homodimer or homodecamer. In contrast to form I RuBisCO, the form III RuBisCO is composed solely of large subunits. Mg(2+) serves as cofactor.

The enzyme catalyses 2 (2R)-3-phosphoglycerate + 2 H(+) = D-ribulose 1,5-bisphosphate + CO2 + H2O. The catalysed reaction is D-ribulose 1,5-bisphosphate + O2 = 2-phosphoglycolate + (2R)-3-phosphoglycerate + 2 H(+). Its function is as follows. Catalyzes the addition of molecular CO(2) and H(2)O to ribulose 1,5-bisphosphate (RuBP), generating two molecules of 3-phosphoglycerate (3-PGA). Functions in an archaeal AMP degradation pathway, together with AMP phosphorylase and R15P isomerase. This Methanosarcina barkeri (strain Fusaro / DSM 804) protein is Ribulose bisphosphate carboxylase.